The primary structure comprises 278 residues: Large ribosomal subunit protein uL2c (278 aa).

2 disordered regions span residues 32–56 and 203–256; these read SLTS…HRGG and QSIG…PTIG. The segment covering 209–220 has biased composition (basic residues); sequence GSKRWQGKRPKV.

Belongs to the universal ribosomal protein uL2 family. Part of the 50S ribosomal subunit.

It localises to the plastid. It is found in the chloroplast. The sequence is that of Large ribosomal subunit protein uL2c (rpl2) from Chara vulgaris (Common stonewort).